Consider the following 498-residue polypeptide: 3-octaprenyl-4-hydroxybenzoate carboxy-lyase (498 aa).

Asn-175 lines the Mn(2+) pocket. Prenylated FMN contacts are provided by residues 178–180 (IYR), 192–194 (RWL), and 197–198 (RG). Residue Glu-241 coordinates Mn(2+). Residue Asp-290 is the Proton donor of the active site.

This sequence belongs to the UbiD family. As to quaternary structure, homohexamer. Prenylated FMN is required as a cofactor. Requires Mn(2+) as cofactor.

The protein resides in the cell membrane. The catalysed reaction is a 4-hydroxy-3-(all-trans-polyprenyl)benzoate + H(+) = a 2-(all-trans-polyprenyl)phenol + CO2. It functions in the pathway cofactor biosynthesis; ubiquinone biosynthesis. Its function is as follows. Catalyzes the decarboxylation of 3-octaprenyl-4-hydroxy benzoate to 2-octaprenylphenol, an intermediate step in ubiquinone biosynthesis. This chain is 3-octaprenyl-4-hydroxybenzoate carboxy-lyase, found in Pectobacterium atrosepticum (strain SCRI 1043 / ATCC BAA-672) (Erwinia carotovora subsp. atroseptica).